The following is a 262-amino-acid chain: Tetratricopeptide repeat protein 33 (262 aa).

Residues 17 to 63 (ATSQQFEAEAADEKDAAENEDGNWLQASKRRKETLQEGCKQRSQQLK) are disordered. 3 TPR repeats span residues 59–92 (SQQL…TPGD), 93–126 (ATLY…NPHS), and 127–160 (WEAW…YPMN). S197 is subject to Phosphoserine.

This Mus musculus (Mouse) protein is Tetratricopeptide repeat protein 33 (Ttc33).